A 188-amino-acid chain; its full sequence is Ribose 1,5-bisphosphate phosphokinase PhnN (188 aa).

9–16 contacts ATP; the sequence is GPSGAGKD.

Belongs to the ribose 1,5-bisphosphokinase family.

It catalyses the reaction alpha-D-ribose 1,5-bisphosphate + ATP = 5-phospho-alpha-D-ribose 1-diphosphate + ADP. The protein operates within metabolic intermediate biosynthesis; 5-phospho-alpha-D-ribose 1-diphosphate biosynthesis; 5-phospho-alpha-D-ribose 1-diphosphate from D-ribose 5-phosphate (route II): step 3/3. Catalyzes the phosphorylation of ribose 1,5-bisphosphate to 5-phospho-D-ribosyl alpha-1-diphosphate (PRPP). This chain is Ribose 1,5-bisphosphate phosphokinase PhnN, found in Pectobacterium parmentieri (strain WPP163) (Pectobacterium wasabiae (strain WPP163)).